The chain runs to 428 residues: Keratin, type I cytoskeletal 18-A (428 aa).

The tract at residues 2–78 is head; it reads SFRSQTSSTT…SVKGSGLFNN (77 aa). The segment at 79-114 is coil 1A; that stretch reads EKETMQILNDRLASYLETVRNLEQANSKLELQIRET. Positions 79 to 390 constitute an IF rod domain; sequence EKETMQILND…RLLDGEDFRL (312 aa). A linker 1 region spans residues 115-131; the sequence is LEKRGPTTQDYSAYEKV. Positions 132–223 are coil 1B; the sequence is VEDLKSQIYD…RSHQTDVEEL (92 aa). Positions 224-247 are linker 12; sequence RKHISECGVQVDVDAPKGQDLSKI. The interval 248–385 is coil 2; sequence MEEIRAQYET…IATYRRLLDG (138 aa). Residues 386-428 form a tail region; sequence EDFRLQDALAVQTTKVQKKITVTETVVDGKVVSQSSEVQEIKK.

The protein belongs to the intermediate filament family. Heterotetramer of two type I and two type II keratins. Keratin-18 associates with keratin-8. In terms of processing, phosphorylated. Proteolytically cleaved by caspases during epithelial cell apoptosis.

When phosphorylated, plays a role in filament reorganization. The chain is Keratin, type I cytoskeletal 18-A from Polypterus senegalus (Senegal bichir).